The primary structure comprises 232 residues: Ribonuclease P protein component 3 (232 aa).

The protein belongs to the eukaryotic/archaeal RNase P protein component 3 family. As to quaternary structure, consists of a catalytic RNA component and at least 4-5 protein subunits. Forms a subcomplex with Rnp2 which stimulates the catalytic RNA.

It is found in the cytoplasm. The catalysed reaction is Endonucleolytic cleavage of RNA, removing 5'-extranucleotides from tRNA precursor.. Functionally, part of ribonuclease P, a protein complex that generates mature tRNA molecules by cleaving their 5'-ends. The sequence is that of Ribonuclease P protein component 3 from Methanocaldococcus jannaschii (strain ATCC 43067 / DSM 2661 / JAL-1 / JCM 10045 / NBRC 100440) (Methanococcus jannaschii).